The chain runs to 49 residues: uncharacterized protein (49 aa).

This is an uncharacterized protein from Saccharomyces cerevisiae (strain ATCC 204508 / S288c) (Baker's yeast).